The sequence spans 107 residues: U1-lycotoxin-Ls1t (107 aa).

The first 20 residues, 1–20 (MMKVLVVVALLVTLISYSSS), serve as a signal peptide directing secretion. Residues 21–41 (EGIDDLEADELLSLMANEQTR) constitute a propeptide that is removed on maturation. 4 disulfide bridges follow: cysteine 44-cysteine 59, cysteine 51-cysteine 68, cysteine 58-cysteine 86, and cysteine 70-cysteine 84.

This sequence belongs to the neurotoxin 19 (CSTX) family. 04 (U1-Lctx) subfamily. Expressed by the venom gland.

It is found in the secreted. This chain is U1-lycotoxin-Ls1t, found in Lycosa singoriensis (Wolf spider).